Consider the following 138-residue polypeptide: 1,4-dihydroxy-2-naphthoyl-CoA hydrolase (138 aa).

Asp14 is an active-site residue.

It belongs to the 4-hydroxybenzoyl-CoA thioesterase family. DHNA-CoA hydrolase subfamily.

It carries out the reaction 1,4-dihydroxy-2-naphthoyl-CoA + H2O = 1,4-dihydroxy-2-naphthoate + CoA + H(+). It participates in cofactor biosynthesis; phylloquinone biosynthesis. It functions in the pathway quinol/quinone metabolism; 1,4-dihydroxy-2-naphthoate biosynthesis; 1,4-dihydroxy-2-naphthoate from chorismate: step 7/7. Catalyzes the hydrolysis of 1,4-dihydroxy-2-naphthoyl-CoA (DHNA-CoA) to 1,4-dihydroxy-2-naphthoate (DHNA), a reaction involved in phylloquinone (vitamin K1) biosynthesis. In Rippkaea orientalis (strain PCC 8801 / RF-1) (Cyanothece sp. (strain PCC 8801)), this protein is 1,4-dihydroxy-2-naphthoyl-CoA hydrolase.